The chain runs to 513 residues: NADH-quinone oxidoreductase chain 13 (513 aa).

The next 14 helical transmembrane spans lie at 3 to 23 (NLLS…ALFL), 34 to 54 (AKWL…FVLF), 81 to 101 (VDGI…LTIL), 112 to 132 (EYMI…TALD), 133 to 153 (LVLF…IIGI), 164 to 184 (FKFF…MIAM), 211 to 231 (MTVV…SFAV), 250 to 270 (PTAG…YGFL), 277 to 297 (FPVA…IAIV), 312 to 332 (VIAY…FAAN), 340 to 360 (IFQM…VGVI), 383 to 403 (AAVF…SGFV), 418 to 438 (WVAL…LWLY), and 463 to 483 (WVFI…RLVT).

This sequence belongs to the complex I subunit 4 family. NDH-1 is composed of at least 14 different subunits, Nqo1 to Nqo14. The complex has a L-shaped structure, with the hydrophobic arm (subunits Nqo7, Nqo8, Nqo10 to Nqo14) embedded in the inner membrane and the hydrophilic peripheral arm (subunits Nqo1 to Nqo6, Nqo9) protruding into the bacterial cytoplasm. The hydrophilic domain contains all the redox centers.

Its subcellular location is the cell inner membrane. The enzyme catalyses a quinone + NADH + 5 H(+)(in) = a quinol + NAD(+) + 4 H(+)(out). Functionally, NDH-1 shuttles electrons from NADH, via FMN and iron-sulfur (Fe-S) centers, to quinones in the respiratory chain. The immediate electron acceptor for the enzyme in this species is believed to be ubiquinone. Couples the redox reaction to proton translocation (for every two electrons transferred, four hydrogen ions are translocated across the cytoplasmic membrane), and thus conserves the redox energy in a proton gradient. This Paracoccus denitrificans protein is NADH-quinone oxidoreductase chain 13.